The sequence spans 450 residues: Deoxyguanosinetriphosphate triphosphohydrolase-like protein (450 aa).

In terms of domain architecture, HD spans 61 to 274 (RLTHSLEVAQ…MELADDIAYA (214 aa)).

Belongs to the dGTPase family. Type 2 subfamily.

The polypeptide is Deoxyguanosinetriphosphate triphosphohydrolase-like protein (Histophilus somni (strain 2336) (Haemophilus somnus)).